The primary structure comprises 142 residues: Large ribosomal subunit protein uL11 (142 aa).

It belongs to the universal ribosomal protein uL11 family. Part of the ribosomal stalk of the 50S ribosomal subunit. Interacts with L10 and the large rRNA to form the base of the stalk. L10 forms an elongated spine to which L12 dimers bind in a sequential fashion forming a multimeric L10(L12)X complex. In terms of processing, one or more lysine residues are methylated.

Functionally, forms part of the ribosomal stalk which helps the ribosome interact with GTP-bound translation factors. The chain is Large ribosomal subunit protein uL11 from Bartonella quintana (strain Toulouse) (Rochalimaea quintana).